The primary structure comprises 226 residues: Ribosomal RNA small subunit methyltransferase Nep1 (226 aa).

Residues glycine 176, glycine 181, and 197–202 (IYEESL) contribute to the S-adenosyl-L-methionine site.

This sequence belongs to the class IV-like SAM-binding methyltransferase superfamily. RNA methyltransferase NEP1 family. Homodimer.

It catalyses the reaction a pseudouridine in rRNA + S-adenosyl-L-methionine = an N(1)-methylpseudouridine in rRNA + S-adenosyl-L-homocysteine + H(+). Methyltransferase involved in ribosomal biogenesis. Specifically catalyzes the N1-methylation of the pseudouridine corresponding to position 914 in M.jannaschii 16S rRNA. This Methanothrix thermoacetophila (strain DSM 6194 / JCM 14653 / NBRC 101360 / PT) (Methanosaeta thermophila) protein is Ribosomal RNA small subunit methyltransferase Nep1.